The sequence spans 974 residues: Hexokinase-1 (974 aa).

The interval 1-42 (MGWGAPLLSRMLHGPGQAGETSPVPERQSGSENPASEDRRPL) is disordered. The interval 57 to 66 (CQRGQAVDVE) is mitochondrial-binding peptide (MBP). 2 Hexokinase domains span residues 72–514 (PLTE…MVTA) and 520–962 (AEQH…LITA). Residues R86 and 140-145 (DLGGSS) each bind ATP. Residues 129-263 (DGSEKGDFIA…DYDANIVAVV (135 aa)) are hexokinase small subdomain 1. D-glucose 6-phosphate is bound at residue 140–147 (DLGGSSFR). D-glucose-binding positions include S211, 228 to 229 (TK), and 264 to 265 (ND). The hexokinase large subdomain 1 stretch occupies residues 264-503 (NDTVGTMMTC…SDVRFLLSES (240 aa)). Residues D265 and T288 each contribute to the D-glucose 6-phosphate site. Residues N291, E316, and 347–350 (QLFE) each bind D-glucose. S393 is subject to Phosphoserine. A D-glucose 6-phosphate-binding site is contributed by 469–471 (DGS). 481 to 482 (RR) contributes to the ATP binding site. D-glucose 6-phosphate is bound by residues S505 and 588-592 (DLGGT). Positions 577–711 (DGTEHGDFLA…EFDLDVVAVV (135 aa)) are hexokinase small subdomain 2. 588-593 (DLGGTN) is a binding site for ATP. Residues 659–660 (SF), 676–677 (TK), and 712–713 (ND) contribute to the D-glucose site. Residues 712-951 (NDTVGTMMTC…CTVSFLLSED (240 aa)) form a hexokinase large subdomain 2 region. 2 residues coordinate D-glucose 6-phosphate: D713 and T736. An ATP-binding site is contributed by T736. D-glucose-binding positions include 738 to 739 (SN), E764, and E798. Residues 803-804 (GM), 840-844 (TKFLS), and 919-923 (TLYKL) contribute to the ATP site. Residues 917 to 919 (DGT) and S953 each bind D-glucose 6-phosphate.

It belongs to the hexokinase family. In terms of assembly, monomer. Interacts with RABL2/RABL2A; binds preferentially to GTP-bound RABL2. Interacts with VDAC1. The HK1-VDAC1 complex interacts with ATF2. Interacts (via N-terminal spermatogenic cell-specific region) with PFKM isoform 2 and isoform 3 (via C-terminus). Interacts with SMAD5. Tyrosine-phosphorylated. In rapidly growing tumor cells exhibiting high glucose catabolic rates, isoform HK1 is markedly elevated. Isoform HK1-SA, isoform HK1-SB and isoform HK1-SC are found only in spermatogenic cells. Isoform HK1-SC is detected in round spermatids, condensing spermatids and mature sperm where it is found in the head membranes, mitochondria of the midpiece and the fibrous sheath of the flagellum. Expressed within the principal piece and midpiece of sperm tail (at protein level).

It is found in the mitochondrion outer membrane. Its subcellular location is the cytoplasm. The protein localises to the cytosol. It localises to the membrane. It carries out the reaction a D-hexose + ATP = a D-hexose 6-phosphate + ADP + H(+). The enzyme catalyses D-fructose + ATP = D-fructose 6-phosphate + ADP + H(+). It catalyses the reaction D-glucose + ATP = D-glucose 6-phosphate + ADP + H(+). The catalysed reaction is D-mannose + ATP = D-mannose 6-phosphate + ADP + H(+). It carries out the reaction D-glucosamine + ATP = D-glucosamine 6-phosphate + ADP + H(+). Its pathway is carbohydrate metabolism; hexose metabolism. The protein operates within carbohydrate degradation; glycolysis; D-glyceraldehyde 3-phosphate and glycerone phosphate from D-glucose: step 1/4. With respect to regulation, hexokinase is an allosteric enzyme inhibited by its product D-glucose 6-phosphate. Hexokinase activity is inhibited by N-acetyl-D-glucosamine. Functionally, catalyzes the phosphorylation of various hexoses, such as D-glucose, D-glucosamine, D-fructose, D-mannose and 2-deoxy-D-glucose, to hexose 6-phosphate (D-glucose 6-phosphate, D-glucosamine 6-phosphate, D-fructose 6-phosphate, D-mannose 6-phosphate and 2-deoxy-D-glucose 6-phosphate, respectively). Does not phosphorylate N-acetyl-D-glucosamine. Mediates the initial step of glycolysis by catalyzing phosphorylation of D-glucose to D-glucose 6-phosphate. Involved in innate immunity and inflammation by acting as a pattern recognition receptor for bacterial peptidoglycan. When released in the cytosol, N-acetyl-D-glucosamine component of bacterial peptidoglycan inhibits the hexokinase activity of HK1 and causes its dissociation from mitochondrial outer membrane, thereby activating the NLRP3 inflammasome. The protein is Hexokinase-1 of Mus musculus (Mouse).